Reading from the N-terminus, the 203-residue chain is Cbp/p300-interacting transactivator 1 (203 aa).

Disordered stretches follow at residues 1–24 (MPTM…DANQ) and 51–86 (TANG…PSFN). Over residues 61–84 (PTSSSGSTSPIGSPTATPSSKPPS) the composition is skewed to low complexity. Positions 168–177 (LMSLVVELGL) match the Nuclear export signal motif.

It belongs to the CITED family. As to quaternary structure, homodimer. Binds to RBM14. Interacts (via N-terminus) with HSPA8; the interaction suppresses the association of CITED1 with p300/CBP and SMAD-mediated transcription transactivation. Interacts (via C-terminus) with TOX3 (via HGM box); the interaction increases estrogen-response element (ERE)-dependent transcription and protection against cell death. Interacts with ESR1; the interaction occurs in a estrogen-dependent manner. Interacts (unphosphorylated form preferentially and via C-terminus) with EP300. Interacts (via C-terminus) with CREBBP. Interacts with EGR2. In terms of processing, phosphorylated. Phosphorylation changes in a cell cycle-dependent manner and reduces its transcriptional cofactor activity. In terms of tissue distribution, expressed in calvarial osteoblasts. Expressed in nulliparous mammary epithelial cells; absent in pregnant mice and in lacting mammary glands. Also expressed in mammary tumors (at protein level). Expressed only in melanocytes and testis. Expressed at high levels in the strongly pigmented melanoma cells but at low levels in the weakly pigmented cells.

Its subcellular location is the nucleus. It is found in the cytoplasm. Transcriptional coactivator of the p300/CBP-mediated transcription complex. Enhances SMAD-mediated transcription by strengthening the functional link between the DNA-binding SMAD transcription factors and the p300/CBP transcription coactivator complex. Stimulates estrogen-dependent transactivation activity mediated by estrogen receptors signaling; stabilizes the interaction of estrogen receptor ESR1 and histone acetyltransferase EP300. Positively regulates TGF-beta signaling through its association with the SMAD/p300/CBP-mediated transcriptional coactivator complex. Induces transcription from estrogen-responsive promoters and protection against cell death. Potentiates EGR2-mediated transcriptional activation activity from the ERBB2 promoter. Acts as an inhibitor of osteoblastic mineralization through a cAMP-dependent parathyroid hormone receptor signaling. May play a role in pigmentation of melanocytes. Associates with chromatin to the estrogen-responsive TGF-alpha promoter region in a estrogen-dependent manner. This Mus musculus (Mouse) protein is Cbp/p300-interacting transactivator 1 (Cited1).